Reading from the N-terminus, the 607-residue chain is Guanine nucleotide-binding protein-like 1 (607 aa).

Positions 1-14 are enriched in basic residues; the sequence is MPRKKPFSVKQKKK. Residues 1–81 form a disordered region; sequence MPRKKPFSVK…GPRGYDPNRY (81 aa). Residues 15–26 are compositionally biased toward basic and acidic residues; the sequence is QLQDKRERKRGL. Ser-32, Ser-33, and Ser-34 each carry phosphoserine. A phosphothreonine mark is found at Thr-48 and Thr-50. A phosphoserine mark is found at Ser-51 and Ser-68. One can recognise a CP-type G domain in the interval 178 to 418; it reads WRQLWRVLEM…LCDCPGLIFP (241 aa). 225-228 is a binding site for GTP; sequence NKVD. Ser-324 carries the post-translational modification Phosphoserine. Residues 367 to 374 and 411 to 415 each bind GTP; these read GFPNVGKS and DCPGL. Residues 547–607 are disordered; sequence GPAGDEEEEE…PYALLGEDEC (61 aa). Residues 550–584 are compositionally biased toward acidic residues; sequence GDEEEEEEEELSSSCEEEGEEDRDADEEGEGDEET. Residues Ser-561, Ser-562, and Ser-563 each carry the phosphoserine modification.

The protein belongs to the TRAFAC class YlqF/YawG GTPase family.

Functionally, possible regulatory or functional link with the histocompatibility cluster. This Homo sapiens (Human) protein is Guanine nucleotide-binding protein-like 1 (GNL1).